A 321-amino-acid chain; its full sequence is MKLQLIIPFSFLISYVSAHTIFMKLQSGGTLYNTSYAIRTPTYDGPINDVTTEYVACNGGPNPTTPSSNIINVVAGSTVNAIWRHTLDSTPANDATYVLDPSHLGPVMAYMKKVTDATTDVGYGPGWFKISEQGLNVATQGWATTDLINNAGVQSITIPSCIANGQYLLRAELIALHSAGGSQGAQLYMECAQINVSGGTGTSTPSTVSFPGAYGQSDPGILINIYQTLTTYTIPGPTPFVCGAAQSTAKSSSTSTAKPTSTSTLSTSTVTKTSSSAVASGTGTAAIYAQCGGQGWTGATVCASGSKCVVSSAFYSQCLPS.

Positions 1 to 18 (MKLQLIIPFSFLISYVSA) are cleaved as a signal peptide. H19 serves as a coordination point for Cu(2+). The N-linked (GlcNAc...) asparagine glycan is linked to N33. 2 disulfide bridges follow: C57–C191 and C161–C242. A Cu(2+)-binding site is contributed by H103. Residues H177 and Q186 each coordinate O2. Cu(2+) is bound at residue Y188. Residue N195 is glycosylated (N-linked (GlcNAc...) asparagine). One can recognise a CBM1 domain in the interval 283-319 (GTAAIYAQCGGQGWTGATVCASGSKCVVSSAFYSQCL).

It belongs to the polysaccharide monooxygenase AA9 family. It depends on Cu(2+) as a cofactor.

It localises to the secreted. It carries out the reaction [(1-&gt;4)-beta-D-glucosyl]n+m + reduced acceptor + O2 = 4-dehydro-beta-D-glucosyl-[(1-&gt;4)-beta-D-glucosyl]n-1 + [(1-&gt;4)-beta-D-glucosyl]m + acceptor + H2O.. Functionally, major lytic polysaccharide monooxygenase (LPMO) that depolymerizes crystalline and amorphous polysaccharides via the oxidation of scissile alpha- or beta-(1-4)-glycosidic bonds, yielding C1 and C4 oxidation products. Catalysis by LPMOs requires the reduction of the active-site copper from Cu(II) to Cu(I) by a reducing agent and H(2)O(2) or O(2) as a cosubstrate. This is AA9 family lytic polysaccharide monooxygenase C from Botryotinia fuckeliana (strain B05.10) (Noble rot fungus).